Reading from the N-terminus, the 165-residue chain is K(+)/H(+) antiporter subunit KhtT (165 aa).

The RCK C-terminal domain occupies 76-161; the sequence is LESIEMAFSD…LKKLIHDFLS (86 aa).

As to quaternary structure, the transporter is composed of the integral membrane protein KhtU and the regulatory protein KhtT.

It localises to the cell membrane. Its activity is regulated as follows. Binds cyclic di-AMP (c-di-AMP), which may regulate the activity. Functionally, required for activity of the potassium/proton antiporter KhtU. Involved in protection of the cell from methylglyoxal, a toxic by-product of glycolysis. The sequence is that of K(+)/H(+) antiporter subunit KhtT from Bacillus subtilis (strain 168).